The primary structure comprises 303 residues: Mycothiol acetyltransferase (303 aa).

N-acetyltransferase domains follow at residues 10 to 156 and 162 to 303; these read ALPG…LAVP and LAVR…SGPR. Glu41 serves as a coordination point for 1D-myo-inositol 2-(L-cysteinylamino)-2-deoxy-alpha-D-glucopyranoside. 86 to 88 is an acetyl-CoA binding site; that stretch reads LLV. 1D-myo-inositol 2-(L-cysteinylamino)-2-deoxy-alpha-D-glucopyranoside is bound by residues Glu189, Lys228, and Glu235. Acetyl-CoA contacts are provided by residues 239-241 and 246-252; these read LGV and SGAGLGR. A 1D-myo-inositol 2-(L-cysteinylamino)-2-deoxy-alpha-D-glucopyranoside-binding site is contributed by Tyr272. 277-282 is a binding site for acetyl-CoA; the sequence is NLRAVR.

This sequence belongs to the acetyltransferase family. MshD subfamily. In terms of assembly, monomer.

The enzyme catalyses 1D-myo-inositol 2-(L-cysteinylamino)-2-deoxy-alpha-D-glucopyranoside + acetyl-CoA = mycothiol + CoA + H(+). In terms of biological role, catalyzes the transfer of acetyl from acetyl-CoA to desacetylmycothiol (Cys-GlcN-Ins) to form mycothiol. The sequence is that of Mycothiol acetyltransferase from Kineococcus radiotolerans (strain ATCC BAA-149 / DSM 14245 / SRS30216).